The chain runs to 222 residues: MKNNAQLLMPREKMLKFGISALTDVELLALFLRTGTRGKDVLTLAKEMLENFGSLYGLLTSEYEQFSGVHGIGVAKFAQLKGIAELARRYYNVRMREKSPLLSPEMTREFLQSQLTGEEREIFMVIFLDSQHRVITHSRLFSGTLNHVEVHPREIIREAIKINASALILAHNHPSGCAEPSKADKLITERIIKSCQFMDLRVLDHIVIGRGEYVSFAERGWI.

Residues 100 to 222 (PLLSPEMTRE…YVSFAERGWI (123 aa)) enclose the MPN domain. Residues histidine 171, histidine 173, and aspartate 184 each coordinate Zn(2+). The short motif at 171–184 (HNHPSGCAEPSKAD) is the JAMM motif element.

This sequence belongs to the UPF0758 family. YicR subfamily.

The polypeptide is UPF0758 protein YicR (Escherichia coli O9:H4 (strain HS)).